A 363-amino-acid chain; its full sequence is Pyrimidine monooxygenase RutA (363 aa).

FMN is bound by residues 49–50 (IK), Asn-115, Glu-124, 140–141 (RY), and Ser-190.

The protein belongs to the NtaA/SnaA/DszA monooxygenase family. RutA subfamily.

It carries out the reaction uracil + FMNH2 + NADH + O2 = (Z)-3-ureidoacrylate + FMN + NAD(+) + H2O + H(+). The catalysed reaction is thymine + FMNH2 + NADH + O2 = (Z)-2-methylureidoacrylate + FMN + NAD(+) + H2O + H(+). Catalyzes the pyrimidine ring opening between N-3 and C-4 by an unusual flavin hydroperoxide-catalyzed mechanism, adding oxygen atoms in the process to yield ureidoacrylate peracid, that immediately reacts with FMN forming ureidoacrylate and FMN-N(5)-oxide. The FMN-N(5)-oxide reacts spontaneously with NADH to produce FMN. Requires the flavin reductase RutF to regenerate FMN in vivo. This is Pyrimidine monooxygenase RutA from Escherichia coli O44:H18 (strain 042 / EAEC).